The sequence spans 402 residues: mRNA-capping enzyme subunit alpha (402 aa).

Lysine 67 acts as the N6-GMP-lysine intermediate in catalysis. The tract at residues 374–402 is disordered; the sequence is SVTKRKLDETSNDDAPAIKKVAKESEKEI.

The protein belongs to the eukaryotic GTase family. As to quaternary structure, heterodimer. The mRNA-capping enzyme is composed of two separate chains alpha and beta, respectively a mRNA guanylyltransferase and an mRNA 5'-triphosphate monophosphatase.

It localises to the nucleus. The catalysed reaction is a 5'-end diphospho-ribonucleoside in mRNA + GTP + H(+) = a 5'-end (5'-triphosphoguanosine)-ribonucleoside in mRNA + diphosphate. Second step of mRNA capping. Transfer of the GMP moiety of GTP to the 5'-end of RNA via an enzyme-GMP covalent reaction intermediate. The sequence is that of mRNA-capping enzyme subunit alpha (ceg1) from Schizosaccharomyces pombe (strain 972 / ATCC 24843) (Fission yeast).